A 138-amino-acid chain; its full sequence is Transcription antitermination protein NusB (138 aa).

This sequence belongs to the NusB family.

Involved in transcription antitermination. Required for transcription of ribosomal RNA (rRNA) genes. Binds specifically to the boxA antiterminator sequence of the ribosomal RNA (rrn) operons. In Coxiella burnetii (strain CbuK_Q154) (Coxiella burnetii (strain Q154)), this protein is Transcription antitermination protein NusB.